The chain runs to 405 residues: G1/S-specific cyclin-D (405 aa).

The 125-residue stretch at 76 to 200 (FYNCMEYEEA…LIVTTLQWET (125 aa)) folds into the Cyclin N-terminal domain. Residues 301-405 (YTSEDAEKTE…STPPKIFKTL (105 aa)) are disordered. Polar residues predominate over residues 311–321 (PTPSAPASTQE). Positions 326-335 (QELKELKEEP) are enriched in basic and acidic residues. The segment covering 358–380 (SEQTPSTPLNDSGFSSDVSSPAS) has biased composition (polar residues).

Belongs to the cyclin family. Cyclin D subfamily. In terms of assembly, interacts with cdk-4; the interaction is likely involved in regulating cdk-4 activity.

In association with cdk-4, regulates the progression through the G1 phase of the cell cycle during postembryonic development. Regulates proliferation of the coelomocyte lineage and intestinal cells during late embryogenesis. In complex with cdk-4, involved in sex determination during gonadogenesis by regulating the asymmetric division of the somatic gonadal precursor cell (SGP). The sequence is that of G1/S-specific cyclin-D from Caenorhabditis elegans.